Reading from the N-terminus, the 833-residue chain is MEEKTQIKTFLGSKLPKYGMKSVRSTLQPMPNGATVTLLGTSKSSNVKSYIKNNGSDCSLSHSFNWRKTNKYQLGSQNTAELNNIQSTHDKLIEPEQHAPAPGTLDGHGIKGGLKSASLFTSKLARPSTMFVSSAEELSQKSFSGPSNLGKFTKGTLLGRTSYSSVNAKSHLNAFYGNRSSGNVQKPRVNSCASRSSSGESLAQSPDNAKSITCEKMVRSQSFSHSIQNVFLPPSSITRSHSFNRAVDLTKPYQNQQLPVRVPLRSGMLTRSSLQSEVLNGNEHVGFGFNRPYAAAGKKLALSNGPAVSSTLVYRMAHPPLLKSSRPPFSGPMTVDSNKNPPADMCVEEEGMVSAQDSSPGKDQELIENESYRRDNDQTGKNESKVRYLSDDVDDISLSSLSSSDKNDLSEDFSDDFIDLEDSNRTRITPEEMTLKEEKHESRPSKDIFDSPKESEQAFSKAEEWIDISVSDRSECTKHTSGNNLISPDTDYRAGSSFELSPSDSSDGTYMWDEEGLEPIGSVHPVGSYESSEMNSIDILNNLESCDLEDDDLMLDVDLPEDAPLENVECDNMNRFDRTDRNVRQSQDGFWKRPPQRWSGQDHYHLSHPGHYHHHGQSDLSRGSPYRESPLGHFESYGGTPFFQAQKMFVDVPDNTVILDEMTLRHMVQDCTAVKTQLLKLKRLLHQHDGSGSLHDVQLSLPSSPEPEDGDQIYKNEDLLNEITQLKEEIKKKDEKIQLLEQQLATRCNCQQKSKEEKCTYADKYTQTPWRRIPGGYCAPSFSPWQGSFQGMPRTVPPHRRQTSSTTAFQQPSQIYRPRPGKTNKATTYRGPQ.

Positions 178-208 are disordered; it reads NRSSGNVQKPRVNSCASRSSSGESLAQSPDN. Polar residues predominate over residues 191 to 208; that stretch reads SCASRSSSGESLAQSPDN. At serine 222 the chain carries Phosphoserine. 4 disordered regions span residues 321–345, 424–452, 478–508, and 602–631; these read LLKSSRPPFSGPMTVDSNKNPPADM, NRTRITPEEMTLKEEKHESRPSKDIFDSP, KHTSGNNLISPDTDYRAGSSFELSPSDSSDG, and DHYHLSHPGHYHHHGQSDLSRGSPYRESPL. Serine 451 is modified (phosphoserine). The span at 496 to 506 shows a compositional bias: low complexity; that stretch reads SSFELSPSDSS. The span at 606–615 shows a compositional bias: basic residues; sequence LSHPGHYHHH. Residues 711–747 adopt a coiled-coil conformation; sequence DQIYKNEDLLNEITQLKEEIKKKDEKIQLLEQQLATR. Positions 789-833 are disordered; sequence FQGMPRTVPPHRRQTSSTTAFQQPSQIYRPRPGKTNKATTYRGPQ. Over residues 803-814 the composition is skewed to polar residues; that stretch reads TSSTTAFQQPSQ.

It belongs to the CCSER family. Expressed in brain (at protein level).

The protein localises to the cytoplasm. The protein resides in the cytoskeleton. Its function is as follows. Microtubule-binding protein which might play a role in microtubule bundling. This Mus musculus (Mouse) protein is Serine-rich coiled-coil domain-containing protein 2 (Ccser2).